The chain runs to 77 residues: Translation initiation factor IF-1, chloroplastic (77 aa).

An S1-like domain is found at 1-71; it reads MKEQKWIHEG…TRGRIIYRLR (71 aa).

It belongs to the IF-1 family. As to quaternary structure, component of the 30S ribosomal translation pre-initiation complex which assembles on the 30S ribosome in the order IF-2 and IF-3, IF-1 and N-formylmethionyl-tRNA(fMet); mRNA recruitment can occur at any time during PIC assembly.

It localises to the plastid. It is found in the chloroplast. Its function is as follows. One of the essential components for the initiation of protein synthesis. Stabilizes the binding of IF-2 and IF-3 on the 30S subunit to which N-formylmethionyl-tRNA(fMet) subsequently binds. Helps modulate mRNA selection, yielding the 30S pre-initiation complex (PIC). Upon addition of the 50S ribosomal subunit IF-1, IF-2 and IF-3 are released leaving the mature 70S translation initiation complex. This Nandina domestica (Heavenly bamboo) protein is Translation initiation factor IF-1, chloroplastic.